Reading from the N-terminus, the 255-residue chain is Antigen LPMC-61 (255 aa).

A run of 12 repeats spans residues 18–48 (WPERQQQQQPQPWLDRQQQQQQHNQQLQKQQ), 49–57 (WPEGQRQQL), 58–65 (WPEQQQQQ), 66–78 (WPEQHQQAQQQQQ), 79–90 (WPQQQPQMQQEQ), 91–103 (WPQQQPQVQQQQQ), 104–140 (WPQQQHRRQHGQQQQCMNSQQQLQQCGQQQQQQLQQQ), 141–152 (WSEQQQQQQQQQ), 153–164 (WPEQPEQQQQQQ), 165–172 (WPEQQQQQ), 173–192 (WSDQNQQQQAQQWQAQQQQQ), and 193–210 (WPQQQQQPQQQQQQQQQQ). A disordered region spans residues 18 to 90 (WPERQQQQQP…QQQPQMQQEQ (73 aa)). The segment at 18 to 210 (WPERQQQQQP…QQQQQQQQQQ (193 aa)) is 12 X approximate tandem repeats, Gln-rich. Over residues 149–210 (QQQQWPEQPE…QQQQQQQQQQ (62 aa)) the composition is skewed to low complexity. The tract at residues 149–224 (QQQQWPEQPE…DGVGIVVPYL (76 aa)) is disordered.

May be covalently linked by disulfide bonds to other polypeptides to form the 80 kDa antigen.

Its function is as follows. Unknown. The Gln-rich tandem repeats may be important for an unknown aspect of the parasitic life cycle. May be an important immunogen. In Eimeria tenella (Coccidian parasite), this protein is Antigen LPMC-61.